Reading from the N-terminus, the 367-residue chain is Pectate lyase 1 (367 aa).

Positions 1-21 (MASPCLIAFLVFLCAIVSCCS) are cleaved as a signal peptide. Disulfide bonds link cysteine 28-cysteine 45 and cysteine 128-cysteine 147. N-linked (GlcNAc...) asparagine glycosylation is present at asparagine 148. Aspartate 170 contacts Ca(2+). N-linked (GlcNAc...) asparagine glycosylation is present at asparagine 178. The Ca(2+) site is built by aspartate 194 and aspartate 198. The active site involves arginine 250. An intrachain disulfide couples cysteine 306 to cysteine 312.

Belongs to the polysaccharide lyase 1 family. Amb a subfamily. It depends on Ca(2+) as a cofactor.

It catalyses the reaction Eliminative cleavage of (1-&gt;4)-alpha-D-galacturonan to give oligosaccharides with 4-deoxy-alpha-D-galact-4-enuronosyl groups at their non-reducing ends.. Its pathway is glycan metabolism; pectin degradation; 2-dehydro-3-deoxy-D-gluconate from pectin: step 2/5. Has pectate lyase activity. The chain is Pectate lyase 1 from Juniperus virginiana (Eastern redcedar).